The chain runs to 321 residues: uncharacterized protein (321 aa).

It belongs to the NAD(P)-dependent epimerase/dehydratase family.

This is an uncharacterized protein from Staphylococcus aureus (strain bovine RF122 / ET3-1).